The sequence spans 165 residues: Endoribonuclease YbeY (165 aa).

Zn(2+)-binding residues include His-130, His-134, and His-140.

It belongs to the endoribonuclease YbeY family. Zn(2+) serves as cofactor.

Its subcellular location is the cytoplasm. In terms of biological role, single strand-specific metallo-endoribonuclease involved in late-stage 70S ribosome quality control and in maturation of the 3' terminus of the 16S rRNA. The chain is Endoribonuclease YbeY from Streptococcus pneumoniae serotype 4 (strain ATCC BAA-334 / TIGR4).